Here is a 283-residue protein sequence, read N- to C-terminus: Non-selective voltage-gated ion channel VDAC1 (283 aa).

An N-acetylalanine modification is found at alanine 2. Residue lysine 12 participates in ATP binding. Lysine 12 is covalently cross-linked (Glycyl lysine isopeptide (Lys-Gly) (interchain with G-Cter in ubiquitin)). At serine 13 the chain carries Phosphoserine. Position 19 is a phosphothreonine (threonine 19). Lysine 20 contacts ATP. The residue at position 20 (lysine 20) is an N6-acetyllysine; alternate. Lysine 20 is subject to N6-succinyllysine; alternate. Residue lysine 20 forms a Glycyl lysine isopeptide (Lys-Gly) (interchain with G-Cter in ubiquitin); alternate linkage. Beta stranded transmembrane passes span 26–35 (LIKLDLKTKS) and 39–47 (LEFTSSGSA). Residues lysine 53 and lysine 61 each participate in a glycyl lysine isopeptide (Lys-Gly) (interchain with G-Cter in ubiquitin) cross-link. A beta stranded membrane pass occupies residues 54–64 (VNGSLETKYRW). Tyrosine 67 carries the post-translational modification Phosphotyrosine. A run of 3 beta stranded transmembrane segments spans residues 69 to 76 (LTFTEKWN), 80 to 89 (TLGTEITVED), and 95 to 104 (LKLTFDSSFS). Threonine 107 carries the post-translational modification Phosphothreonine. An N6-acetyllysine; alternate modification is found at lysine 109. Lysine 109 participates in a covalent cross-link: Glycyl lysine isopeptide (Lys-Gly) (interchain with G-Cter in ubiquitin); alternate. Lysine 110 is covalently cross-linked (Glycyl lysine isopeptide (Lys-Gly) (interchain with G-Cter in ubiquitin)). A run of 4 beta stranded transmembrane segments spans residues 111–120 (NAKIKTGYKR), 123–130 (INLGCDVD), 137–145 (SIRGALVLG), and 150–158 (LAGYQMNFE). Phosphoserine is present on serine 137. Lysine 161 is covalently cross-linked (Glycyl lysine isopeptide (Lys-Gly) (interchain with G-Cter in ubiquitin)). 6 beta stranded membrane passes run 163-175 (RVTQSNFAVGYKT), 178-185 (FQLHTNVN), 189-198 (EFGGSIYQKV), 202-211 (LETAVNLAWT), 218-227 (RFGIAAKYQV), and 231-238 (ACFSAKVN). Phosphoserine; by NEK1 is present on serine 193. At serine 240 the chain carries Phosphoserine. 242 to 244 (LIG) lines the NAD(+) pocket. A beta stranded membrane pass occupies residues 242 to 251 (LIGLGYTQTL). The residue at position 252 (lysine 252) is an N6-acetyllysine. The chain crosses the membrane as a beta stranded span at residues 254-263 (GIKLTLSALL). Position 260-264 (260-264 (SALLD)) interacts with NAD(+). At lysine 266 the chain carries N6-acetyllysine; alternate. Lysine 266 is covalently cross-linked (Glycyl lysine isopeptide (Lys-Gly) (interchain with G-Cter in ubiquitin); alternate). A beta stranded membrane pass occupies residues 273-282 (HKLGLGLEFQ). A Glycyl lysine isopeptide (Lys-Gly) (interchain with G-Cter in ubiquitin) cross-link involves residue lysine 274.

It belongs to the eukaryotic mitochondrial porin family. Homodimer and homotrimer; in response to cyclic AMP or calcium; oligomerization is required for scramblase activity. Component of the mitochondrial permeability transition pore complex (mPTPC), at least composed of SPG7, VDAC1 and PPIF. Interacts with SPG7, NIPSNAP2 and SLC25A30. Interacts with hexokinases including HK1. The HK1-VDAC1 complex interacts with ATF2. Interacts with BCL2L1. Interacts with BAK1. Interacts with RTL10/BOP (via BH3 domain). Interacts with amyloid-beta and APP; induces VDAC1 dephosphorylation. Interacts with TMEM41B. Interacts with BCAP31. Interacts with HSPA9; this interaction couples ITPR1 to VDAC1. Post-translationally, phosphorylation at Ser-193 by NEK1 promotes the closed conformational state preventing excessive mitochondrial membrane permeability and subsequent apoptotic cell death after injury. Phosphorylation by the AKT-GSK3B axis stabilizes the protein probably by preventing ubiquitin-mediated proteasomal degradation. In terms of processing, ubiquitinated. Undergoes monoubiquitination and polyubiquitination by PRKN; monoubiquitination at Lys-274 inhibits apoptosis, whereas polyubiquitination leads to its degradation and promotes mitophagy. Deubiquitinated by USP30. As to expression, widely expressed. High levels in heart and kidney with lower levels in brain and ascitic tumor. Very low levels in liver.

The protein resides in the mitochondrion outer membrane. It is found in the cell membrane. It localises to the membrane raft. It catalyses the reaction Ca(2+)(in) = Ca(2+)(out). The catalysed reaction is Na(+)(in) = Na(+)(out). The enzyme catalyses chloride(in) = chloride(out). It carries out the reaction Mg(2+)(in) = Mg(2+)(out). It catalyses the reaction K(+)(in) = K(+)(out). The catalysed reaction is ATP(in) = ATP(out). The enzyme catalyses L-glutamate(out) = L-glutamate(in). It carries out the reaction dopamine(out) = dopamine(in). It catalyses the reaction acetylcholine(in) = acetylcholine(out). The catalysed reaction is Fe(III)-[cytochrome c](out) = Fe(III)-[cytochrome c](in). The enzyme catalyses a 1,2-diacyl-sn-glycero-3-phosphocholine(in) = a 1,2-diacyl-sn-glycero-3-phosphocholine(out). It carries out the reaction a 1,2-diacyl-sn-glycero-3-phospho-L-serine(in) = a 1,2-diacyl-sn-glycero-3-phospho-L-serine(out). With respect to regulation, inhibited by nitric oxide. Voltage-gated ion channel activity is inhibited by lanthanum(3+) and ruthenium red. Mitochondrial calcium transport is inhibited by lanthanum(3+), ruthenium red and Ru360. Functionally, non-selective voltage-gated ion channel that mediates the transport of anions and cations through the mitochondrion outer membrane and plasma membrane. The channel at the outer mitochondrial membrane allows diffusion of small hydrophilic molecules; in the plasma membrane it is involved in cell volume regulation and apoptosis. It adopts an open conformation at low or zero membrane potential and a closed conformation at potentials above 30-40 mV. The open state has a weak anion selectivity whereas the closed state is cation-selective. Binds various signaling molecules, including the sphingolipid ceramide, the phospholipid phosphatidylcholine, and the sterols cholesterol and oxysterol. In depolarized mitochondria, acts downstream of PRKN and PINK1 to promote mitophagy or prevent apoptosis; polyubiquitination by PRKN promotes mitophagy, while monoubiquitination by PRKN decreases mitochondrial calcium influx which ultimately inhibits apoptosis. May participate in the formation of the permeability transition pore complex (PTPC) responsible for the release of mitochondrial products that triggers apoptosis. May mediate ATP export from cells. Part of a complex composed of HSPA9, ITPR1 and VDAC1 that regulates mitochondrial calcium-dependent apoptosis by facilitating calcium transport from the ER lumen to the mitochondria intermembrane space thus providing calcium for the downstream calcium channel MCU that directly releases it into mitochondria matrix. Its function is as follows. Catalyzes the scrambling of phospholipids across the outer mitochondrial membrane; the mechanism is unrelated to channel activity and is capable of translocating both anionic and zwitterionic phospholipids. This is Non-selective voltage-gated ion channel VDAC1 from Rattus norvegicus (Rat).